The sequence spans 415 residues: Gamma-glutamyl phosphate reductase (415 aa).

Belongs to the gamma-glutamyl phosphate reductase family.

The protein resides in the cytoplasm. The catalysed reaction is L-glutamate 5-semialdehyde + phosphate + NADP(+) = L-glutamyl 5-phosphate + NADPH + H(+). It participates in amino-acid biosynthesis; L-proline biosynthesis; L-glutamate 5-semialdehyde from L-glutamate: step 2/2. Functionally, catalyzes the NADPH-dependent reduction of L-glutamate 5-phosphate into L-glutamate 5-semialdehyde and phosphate. The product spontaneously undergoes cyclization to form 1-pyrroline-5-carboxylate. In Clostridium perfringens (strain 13 / Type A), this protein is Gamma-glutamyl phosphate reductase.